The chain runs to 95 residues: Large ribosomal subunit protein bL28 (95 aa).

The segment at 1-22 (MSRRCELTGKGPMTGNNVSHAN) is disordered.

Belongs to the bacterial ribosomal protein bL28 family.

The protein is Large ribosomal subunit protein bL28 of Ruegeria pomeroyi (strain ATCC 700808 / DSM 15171 / DSS-3) (Silicibacter pomeroyi).